The sequence spans 717 residues: Segment polarity protein dishevelled homolog DVL-3 (717 aa).

Positions 1–82 (MGETKVIYHL…RVVCWLVSAD (82 aa)) constitute a DIX domain. Positions 89–235 (GSVCADIQSD…PQIERSSSFS (147 aa)) are disordered. Polar residues predominate over residues 118-127 (HPNTRGSQEN). Over residues 140–155 (ARRERPGRKETSEHAT) the composition is skewed to basic and acidic residues. The span at 173–189 (ESSSTLMSSELDSTSFF) shows a compositional bias: low complexity. The segment covering 199–210 (RFSNSTEQSSAS) has biased composition (polar residues). Basic residues predominate over residues 212-224 (LMRRHKRRRRKPK). The PDZ domain occupies 248-333 (TVTLNMEKYN…KPGPITLTVA (86 aa)). Residues 421–495 (SESGLEVRDR…SEQCYYIFGD (75 aa)) form the DEP domain. Residues 552 to 653 (PDPAYIYGGG…THQSFGPPGI (102 aa)) are disordered. Residues 564–579 (GSQHSEGSRSSGSNRS) are compositionally biased toward low complexity. Basic and acidic residues-rich tracts occupy residues 580-593 (STEK…KGGD) and 602-618 (ESDH…RAAS). Basic residues predominate over residues 629 to 645 (HRSHHSIAHSIRSHHTH).

Belongs to the DSH family. As to expression, expressed throughout the epidermis.

Its subcellular location is the cytoplasm. Involved in the signal transduction pathway mediated by multiple Wnt genes. Required during ciliogenesis for the docking of basal bodies to the apical plasma membrane. This Xenopus laevis (African clawed frog) protein is Segment polarity protein dishevelled homolog DVL-3.